Reading from the N-terminus, the 274-residue chain is NH(3)-dependent NAD(+) synthetase (274 aa).

Position 46 to 53 (46 to 53 (GISGGQDS)) interacts with ATP. Mg(2+) is bound at residue Asp52. Residue Arg140 coordinates deamido-NAD(+). ATP is bound at residue Thr160. Glu165 contributes to the Mg(2+) binding site. The deamido-NAD(+) site is built by Lys173 and Asp180. Lys189 and Thr211 together coordinate ATP. 260-261 (HK) contributes to the deamido-NAD(+) binding site.

This sequence belongs to the NAD synthetase family. In terms of assembly, homodimer.

The catalysed reaction is deamido-NAD(+) + NH4(+) + ATP = AMP + diphosphate + NAD(+) + H(+). It participates in cofactor biosynthesis; NAD(+) biosynthesis; NAD(+) from deamido-NAD(+) (ammonia route): step 1/1. Functionally, catalyzes the ATP-dependent amidation of deamido-NAD to form NAD. Uses ammonia as a nitrogen source. The protein is NH(3)-dependent NAD(+) synthetase of Streptococcus pneumoniae (strain Hungary19A-6).